The primary structure comprises 302 residues: Putative receptor-like protein 16 (302 aa).

LRR repeat units lie at residues 1-19 (MNLTTNGFQRNLPSSLGNM), 20-43 (EMIEFLDISHNSFHGKLPRSFLKG), and 45-70 (DSLIVLKLSHKKLSEEVFPEASNFFS). The LRR 4; degenerate repeat unit spans residues 72–91 (LELSMDNNLFTGKIGRGLQS). LRR repeat units lie at residues 92-115 (LRSLIMLDISNNNLSGVIPSWFDQ), 116-140 (LQDLHSLQISNNLLEGEVPISLFNM), 142-164 (SLQLLALSANSLSGDLPQAISGY), 166-188 (ALKVLLLRDNNLSGVIPDTLLGK), 190-211 (IIVLDLRNNRLSGNIPEFINTQ), 213-234 (IRILLLRGNNLTGSIPRRLCAV), and 235-258 (RSIHLLDLANNKLNGSIPSCLRNA).

It belongs to the RLP family.

The polypeptide is Putative receptor-like protein 16 (Arabidopsis thaliana (Mouse-ear cress)).